The sequence spans 610 residues: Phosphoenolpyruvate carboxykinase [GTP] (610 aa).

Residues arginine 82 and 221-223 each bind substrate; that span reads YGG. The Mn(2+) site is built by lysine 230 and histidine 250. Serine 272 contributes to the substrate binding site. A GTP-binding site is contributed by 273 to 278; it reads ACGKTN. Cysteine 274 is an active-site residue. Aspartate 297 serves as a coordination point for Mn(2+). 387 to 389 contacts substrate; the sequence is NSR. Residues arginine 389, arginine 420, and 515 to 518 each bind GTP; that span reads FGDN.

This sequence belongs to the phosphoenolpyruvate carboxykinase [GTP] family. Monomer. Requires Mn(2+) as cofactor.

The protein resides in the cytoplasm. It catalyses the reaction oxaloacetate + GTP = phosphoenolpyruvate + GDP + CO2. Its pathway is carbohydrate biosynthesis; gluconeogenesis. In terms of biological role, involved in the gluconeogenesis. Catalyzes the conversion of oxaloacetate (OAA) to phosphoenolpyruvate (PEP), the rate-limiting step in the metabolic pathway that produces glucose from lactate and other precursors derived from the citric acid cycle. The protein is Phosphoenolpyruvate carboxykinase [GTP] of Corynebacterium glutamicum (strain ATCC 13032 / DSM 20300 / JCM 1318 / BCRC 11384 / CCUG 27702 / LMG 3730 / NBRC 12168 / NCIMB 10025 / NRRL B-2784 / 534).